The following is a 389-amino-acid chain: Tyrosine aminotransferase (389 aa).

Lys-242 bears the N6-(pyridoxal phosphate)lysine mark.

The protein belongs to the class-I pyridoxal-phosphate-dependent aminotransferase family. As to quaternary structure, homodimer. It depends on pyridoxal 5'-phosphate as a cofactor.

It catalyses the reaction L-tyrosine + 2-oxoglutarate = 3-(4-hydroxyphenyl)pyruvate + L-glutamate. It functions in the pathway amino-acid degradation; L-phenylalanine degradation; acetoacetate and fumarate from L-phenylalanine: step 2/6. Functionally, transaminase involved in tyrosine breakdown. Converts tyrosine to p-hydroxyphenylpyruvate. The sequence is that of Tyrosine aminotransferase (tatA) from Rhizobium meliloti (strain 1021) (Ensifer meliloti).